The following is a 288-amino-acid chain: Nucleotide-binding protein PM0169 (288 aa).

8-15 provides a ligand contact to ATP; sequence GHSGAGKS. GTP is bound at residue 56-59; sequence DIRN.

It belongs to the RapZ-like family.

Functionally, displays ATPase and GTPase activities. This Pasteurella multocida (strain Pm70) protein is Nucleotide-binding protein PM0169.